We begin with the raw amino-acid sequence, 2194 residues long: Genome polyprotein (2194 aa).

G2 carries N-myristoyl glycine; by host lipidation. At 2–1504 (GAQVSTQKTG…HVSRAFICLQ (1503 aa)) the chain is on the cytoplasmic side. Residues 566-582 (LYQNDPEGALNKAVGRV) are amphipathic alpha-helix. Active-site for protease 2A activity residues include H881 and D899. C916 and C918 together coordinate Zn(2+). Residue C970 is the For protease 2A activity of the active site. Zn(2+) is bound by residues C976 and H978. Residues 1110–1182 (NNNWLKKFTE…EQSAPSQSDQ (73 aa)) form a membrane-binding region. An oligomerization region spans residues 1110–1248 (NNNWLKKFTE…SPGAGKSVAT (139 aa)). The tract at residues 1131–1135 (AIKIQ) is RNA-binding. In terms of domain architecture, SF3 helicase spans 1214-1370 (EKKMSNYIQF…SMYSQNGKIN (157 aa)). Zn(2+) is bound by residues C1378, C1390, and C1395. The segment at 1378–1395 (CDEECCPVNFKRCCPLVC) adopts a C4-type; degenerate zinc-finger fold. The segment at 1422–1429 (EYNHRHSV) is RNA-binding. Residues 1433 to 1438 (LEALFQ) form an oligomerization region. Residues 1505–1520 (ALTTFVSVAGIIYIIY) lie within the membrane without spanning it. At 1521 to 2194 (KLFAGFQGAY…TLRRKWLDSF (674 aa)) the chain is on the cytoplasmic side. O-(5'-phospho-RNA)-tyrosine is present on Y1530. One can recognise a Peptidase C3 domain in the interval 1550 to 1728 (GPAFEFAVAM…FSAALLRHYF (179 aa)). Residues H1589, E1620, and C1696 each act as for protease 3C activity in the active site. Residues 1959 to 2075 (GHLIAFDYSG…SYPHPIDASL (117 aa)) enclose the RdRp catalytic domain. Mg(2+) is bound by residues D1965 and D2061.

This sequence belongs to the picornaviruses polyprotein family. Interacts with capsid protein VP1 and capsid protein VP3 to form heterotrimeric protomers. In terms of assembly, interacts with capsid protein VP0, and capsid protein VP3 to form heterotrimeric protomers. Five protomers subsequently associate to form pentamers which serve as building blocks for the capsid. Interacts with capsid protein VP2, capsid protein VP3 and capsid protein VP4 following cleavage of capsid protein VP0. As to quaternary structure, interacts with capsid protein VP1 and capsid protein VP3 in the mature capsid. Interacts with capsid protein VP0 and capsid protein VP1 to form heterotrimeric protomers. Five protomers subsequently associate to form pentamers which serve as building blocks for the capsid. Interacts with capsid protein VP4 in the mature capsid. Interacts with protein 2C; this interaction may be important for virion morphogenesis. In terms of assembly, interacts with capsid protein VP1 and capsid protein VP3. As to quaternary structure, homodimer. Homohexamer; forms a hexameric ring structure with 6-fold symmetry characteristic of AAA+ ATPases. Interacts (via N-terminus) with host RTN3 (via reticulon domain); this interaction is important for viral replication. Interacts with capsid protein VP3; this interaction may be important for virion morphogenesis. In terms of assembly, interacts with protein 3CD. As to quaternary structure, homodimer. Interacts with host GBF1. Interacts (via GOLD domain) with host ACBD3 (via GOLD domain); this interaction allows the formation of a viral protein 3A/ACBD3 heterotetramer with a 2:2 stoichiometry, which will stimulate the recruitment of host PI4KB in order to synthesize PI4P at the viral RNA replication sites. Interacts with RNA-directed RNA polymerase. In terms of assembly, interacts with protein 3AB and with RNA-directed RNA polymerase. As to quaternary structure, interacts with Viral protein genome-linked and with protein 3CD. Requires Mg(2+) as cofactor. Post-translationally, specific enzymatic cleavages in vivo by the viral proteases yield processing intermediates and the mature proteins. Myristoylation is required for the formation of pentamers during virus assembly. Further assembly of 12 pentamers and a molecule of genomic RNA generates the provirion. In terms of processing, during virion maturation, immature virions are rendered infectious following cleavage of VP0 into VP4 and VP2. This maturation seems to be an autocatalytic event triggered by the presence of RNA in the capsid and it is followed by a conformational change infectious virion. Post-translationally, myristoylation is required during RNA encapsidation and formation of the mature virus particle. VPg is uridylylated by the polymerase into VPg-pUpU. This acts as a nucleotide-peptide primer for the genomic RNA replication.

The protein resides in the virion. It localises to the host cytoplasm. Its subcellular location is the host cytoplasmic vesicle membrane. The protein localises to the host nucleus. The catalysed reaction is a ribonucleoside 5'-triphosphate + H2O = a ribonucleoside 5'-diphosphate + phosphate + H(+). It carries out the reaction Selective cleavage of Tyr-|-Gly bond in the picornavirus polyprotein.. It catalyses the reaction RNA(n) + a ribonucleoside 5'-triphosphate = RNA(n+1) + diphosphate. The enzyme catalyses Selective cleavage of Gln-|-Gly bond in the poliovirus polyprotein. In other picornavirus reactions Glu may be substituted for Gln, and Ser or Thr for Gly.. Replication or transcription is subject to high level of random mutations by the nucleotide analog ribavirin. In terms of biological role, forms an icosahedral capsid of pseudo T=3 symmetry with capsid proteins VP2 and VP3. The capsid is 300 Angstroms in diameter, composed of 60 copies of each capsid protein and enclosing the viral positive strand RNA genome. Capsid protein VP1 mainly forms the vertices of the capsid. Capsid protein VP1 interacts with host cell receptor to provide virion attachment to target host cells. This attachment induces virion internalization. Tyrosine kinases are probably involved in the entry process. After binding to its receptor, the capsid undergoes conformational changes. Capsid protein VP1 N-terminus (that contains an amphipathic alpha-helix) and capsid protein VP4 are externalized. Together, they shape a pore in the host membrane through which viral genome is translocated to host cell cytoplasm. Its function is as follows. Forms an icosahedral capsid of pseudo T=3 symmetry with capsid proteins VP2 and VP3. The capsid is 300 Angstroms in diameter, composed of 60 copies of each capsid protein and enclosing the viral positive strand RNA genome. Lies on the inner surface of the capsid shell. After binding to the host receptor, the capsid undergoes conformational changes. Capsid protein VP4 is released, Capsid protein VP1 N-terminus is externalized, and together, they shape a pore in the host membrane through which the viral genome is translocated into the host cell cytoplasm. Functionally, component of immature procapsids, which is cleaved into capsid proteins VP4 and VP2 after maturation. Allows the capsid to remain inactive before the maturation step. In terms of biological role, cysteine protease that cleaves viral polyprotein and specific host proteins. It is responsible for the autocatalytic cleavage between the P1 and P2 regions, which is the first cleavage occurring in the polyprotein. Also cleaves the host translation initiation factor EIF4G1, in order to shut down the capped cellular mRNA translation. Inhibits the host nucleus-cytoplasm protein and RNA trafficking by cleaving host members of the nuclear pores. Counteracts stress granule formation probably by antagonizing its assembly or promoting its dissassembly. Its function is as follows. Plays an essential role in the virus replication cycle by acting as a viroporin. Creates a pore in the host endoplasmic reticulum and as a consequence releases Ca2+ in the cytoplasm of infected cell. In turn, high levels of cytoplasmic calcium may trigger membrane trafficking and transport of viral ER-associated proteins to viroplasms, sites of viral genome replication. Induces and associates with structural rearrangements of intracellular membranes. Displays RNA-binding, nucleotide binding and NTPase activities. May play a role in virion morphogenesis and viral RNA encapsidation by interacting with the capsid protein VP3. Functionally, localizes the viral replication complex to the surface of membranous vesicles. Together with protein 3CD binds the Cis-Active RNA Element (CRE) which is involved in RNA synthesis initiation. Acts as a cofactor to stimulate the activity of 3D polymerase, maybe through a nucleid acid chaperone activity. In terms of biological role, localizes the viral replication complex to the surface of membranous vesicles. It inhibits host cell endoplasmic reticulum-to-Golgi apparatus transport and causes the disassembly of the Golgi complex, possibly through GBF1 interaction. This would result in depletion of MHC, trail receptors and IFN receptors at the host cell surface. Plays an essential role in viral RNA replication by recruiting ACBD3 and PI4KB at the viral replication sites, thereby allowing the formation of the rearranged membranous structures where viral replication takes place. Its function is as follows. Acts as a primer for viral RNA replication and remains covalently bound to viral genomic RNA. VPg is uridylylated prior to priming replication into VPg-pUpU. The oriI viral genomic sequence may act as a template for this. The VPg-pUpU is then used as primer on the genomic RNA poly(A) by the RNA-dependent RNA polymerase to replicate the viral genome. During genome replication, the VPg-RNA linkage is removed by the host TDP2, thereby accelerating replication. During the late stage of the replication cycle, host TDP2 is excluded from sites of viral RNA synthesis and encapsidation, allowing for the generation of progeny virions. Involved in the viral replication complex and viral polypeptide maturation. It exhibits protease activity with a specificity and catalytic efficiency that is different from protease 3C. Protein 3CD lacks polymerase activity. Protein 3CD binds to the 5'UTR of the viral genome. Functionally, replicates the viral genomic RNA on the surface of intracellular membranes. May form linear arrays of subunits that propagate along a strong head-to-tail interaction called interface-I. Covalently attaches UMP to a tyrosine of VPg, which is used to prime RNA synthesis. The positive stranded RNA genome is first replicated at virus induced membranous vesicles, creating a dsRNA genomic replication form. This dsRNA is then used as template to synthesize positive stranded RNA genomes. ss(+)RNA genomes are either translated, replicated or encapsidated. In terms of biological role, major viral protease that mediates proteolytic processing of the polyprotein. Cleaves host EIF5B, contributing to host translation shutoff. Also cleaves host PABPC1, contributing to host translation shutoff. Cleaves host NLRP1, triggers host N-glycine-mediated degradation of the autoinhibitory NLRP1 N-terminal fragment. The protein is Genome polyprotein of Homo sapiens (Human).